The chain runs to 378 residues: Lipid-A-disaccharide synthase (378 aa).

This sequence belongs to the LpxB family.

It carries out the reaction a lipid X + a UDP-2-N,3-O-bis[(3R)-3-hydroxyacyl]-alpha-D-glucosamine = a lipid A disaccharide + UDP + H(+). Its pathway is bacterial outer membrane biogenesis; LPS lipid A biosynthesis. In terms of biological role, condensation of UDP-2,3-diacylglucosamine and 2,3-diacylglucosamine-1-phosphate to form lipid A disaccharide, a precursor of lipid A, a phosphorylated glycolipid that anchors the lipopolysaccharide to the outer membrane of the cell. The protein is Lipid-A-disaccharide synthase of Methylobacillus flagellatus (strain ATCC 51484 / DSM 6875 / VKM B-1610 / KT).